The primary structure comprises 325 residues: Tetraacyldisaccharide 4'-kinase (325 aa).

53–60 (SVGGNGKT) contributes to the ATP binding site.

The protein belongs to the LpxK family.

The catalysed reaction is a lipid A disaccharide + ATP = a lipid IVA + ADP + H(+). It functions in the pathway glycolipid biosynthesis; lipid IV(A) biosynthesis; lipid IV(A) from (3R)-3-hydroxytetradecanoyl-[acyl-carrier-protein] and UDP-N-acetyl-alpha-D-glucosamine: step 6/6. Functionally, transfers the gamma-phosphate of ATP to the 4'-position of a tetraacyldisaccharide 1-phosphate intermediate (termed DS-1-P) to form tetraacyldisaccharide 1,4'-bis-phosphate (lipid IVA). The chain is Tetraacyldisaccharide 4'-kinase from Mannheimia succiniciproducens (strain KCTC 0769BP / MBEL55E).